The primary structure comprises 66 residues: Large ribosomal subunit protein uL29 (66 aa).

Belongs to the universal ribosomal protein uL29 family.

The chain is Large ribosomal subunit protein uL29 from Francisella philomiragia subsp. philomiragia (strain ATCC 25017 / CCUG 19701 / FSC 153 / O#319-036).